Consider the following 276-residue polypeptide: UPF0328 protein ECU03_0010 (276 aa).

Disordered stretches follow at residues 1-132 (MAAP…PIIS) and 156-176 (SFCQNTRDSPSLPPQRPNMVH). The span at 106 to 126 (HTEGCHTHEANPEPNTKHTET) shows a compositional bias: basic and acidic residues.

This sequence belongs to the UPF0328 family.

The chain is UPF0328 protein ECU03_0010 from Encephalitozoon cuniculi (strain GB-M1) (Microsporidian parasite).